Consider the following 424-residue polypeptide: Serine--tRNA ligase (424 aa).

229–231 (TAE) contributes to the L-serine binding site. ATP-binding positions include 260-262 (RTE) and V276. E283 contributes to the L-serine binding site. Position 347–350 (347–350 (EVTS)) interacts with ATP. Residue T382 coordinates L-serine.

The protein belongs to the class-II aminoacyl-tRNA synthetase family. Type-1 seryl-tRNA synthetase subfamily. Homodimer. The tRNA molecule binds across the dimer.

The protein resides in the cytoplasm. The enzyme catalyses tRNA(Ser) + L-serine + ATP = L-seryl-tRNA(Ser) + AMP + diphosphate + H(+). It carries out the reaction tRNA(Sec) + L-serine + ATP = L-seryl-tRNA(Sec) + AMP + diphosphate + H(+). It functions in the pathway aminoacyl-tRNA biosynthesis; selenocysteinyl-tRNA(Sec) biosynthesis; L-seryl-tRNA(Sec) from L-serine and tRNA(Sec): step 1/1. Catalyzes the attachment of serine to tRNA(Ser). Is also able to aminoacylate tRNA(Sec) with serine, to form the misacylated tRNA L-seryl-tRNA(Sec), which will be further converted into selenocysteinyl-tRNA(Sec). The polypeptide is Serine--tRNA ligase (Rubrobacter xylanophilus (strain DSM 9941 / JCM 11954 / NBRC 16129 / PRD-1)).